A 466-amino-acid chain; its full sequence is 5-hydroxytryptamine receptor (466 aa).

A disordered region spans residues Met1–Ser21. Residues Met1–Ser66 lie on the Extracellular side of the membrane. N-linked (GlcNAc...) asparagine glycans are attached at residues Asn2, Asn10, Asn29, Asn41, Asn45, and Asn50. Residues Asn10–Ser21 show a composition bias toward polar residues. Residues Val67–Ile89 form a helical membrane-spanning segment. The Cytoplasmic portion of the chain corresponds to Glu90 to Tyr99. A helical transmembrane segment spans residues Leu100–Val121. Over Tyr122–Asp136 the chain is Extracellular. An intrachain disulfide couples Cys135 to Cys215. A helical membrane pass occupies residues Met137–Thr158. Over Asp159–Arg177 the chain is Cytoplasmic. Residues Ile178–Trp200 traverse the membrane as a helical segment. The Extracellular portion of the chain corresponds to Lys201–Thr228. A helical membrane pass occupies residues Met229–Ala250. The Cytoplasmic segment spans residues Arg251 to Thr386. Disordered regions lie at residues Arg255–Arg282 and Val339–Arg360. Residues Val339 to Thr353 are compositionally biased toward low complexity. A helical membrane pass occupies residues Leu387–Ile410. Residues Cys411–Tyr419 lie on the Extracellular side of the membrane. A helical transmembrane segment spans residues Leu420 to Phe442. The Cytoplasmic segment spans residues Ser443 to Phe466.

This sequence belongs to the G-protein coupled receptor 1 family.

The protein resides in the cell membrane. In terms of biological role, this is a receptor for 5-hydroxytryptamine (serotonin), a biogenic hormone that function as a neurotransmitter, a hormone, and a mitogen. This Heliothis virescens (Tobacco budworm moth) protein is 5-hydroxytryptamine receptor.